The chain runs to 288 residues: Acidic endochitinase SP2 (288 aa).

The signal sequence occupies residues 1–27 (MTLLLKNTLYLALIISVISSFPTSLFA). Position 28 is a pyrrolidone carboxylic acid (Gln-28). The 36-residue stretch at 28-63 (QNCGCAPNLCCSNFGFCGTGTPYCGVGNCQSGPCEG) folds into the Chitin-binding type-1 domain. Disulfide bonds link Cys-30–Cys-38, Cys-32–Cys-44, Cys-37–Cys-51, and Cys-56–Cys-61. Positions 64–78 (GTPTTPTTPTTPTTP) are enriched in low complexity. The interval 64–84 (GTPTTPTTPTTPTTPGTGGGG) is disordered. The segment at 64-85 (GTPTTPTTPTTPTTPGTGGGGS) is hinge region (Gly/Pro/Thr-rich). A 4-hydroxyproline mark is found at Pro-66, Pro-69, Pro-72, and Pro-75. A run of 4 repeats spans residues 67-69 (TTP), 70-72 (TTP), 73-75 (TTP), and 76-78 (TTP). The tract at residues 67-78 (TTPTTPTTPTTP) is 4 X 3 AA tandem repeats of T-T-P. The tract at residues 86-288 (SVSDIVSQAF…GVAPGDNLTC (203 aa)) is catalytic. Cystine bridges form between Cys-107/Cys-154, Cys-168/Cys-178, and Cys-256/Cys-288. Glu-149 functions as the Proton donor in the catalytic mechanism.

Belongs to the glycosyl hydrolase 19 family. Chitinase class I subfamily. In terms of processing, O-glycosylated on hydroxyprolines; contains xylose. In terms of tissue distribution, localized to infected area.

Its subcellular location is the secreted. The protein resides in the extracellular space. It carries out the reaction Random endo-hydrolysis of N-acetyl-beta-D-glucosaminide (1-&gt;4)-beta-linkages in chitin and chitodextrins.. In terms of biological role, defense against chitin-containing fungal pathogens. The chain is Acidic endochitinase SP2 (SP2) from Beta vulgaris (Sugar beet).